Reading from the N-terminus, the 501-residue chain is G protein-activated inward rectifier potassium channel 1 (501 aa).

A disordered region spans residues 1–40; it reads MSALRRKFGDDYQVVTTSSSGSGLQPQGPGQGPQQQLVPK. Over 1–80 the chain is Cytoplasmic; sequence MSALRRKFGD…LFTTLVDLKW (80 aa). Residues 18–37 are compositionally biased toward low complexity; sequence SSSGSGLQPQGPGQGPQQQL. The chain crosses the membrane as a helical span at residues 81–105; it reads RWNLFIFILTYTVAWLFMASMWWVI. Residues 106 to 129 lie on the Extracellular side of the membrane; the sequence is AYTRGDLNKAHVGNYTPCVANVYN. N119 carries an N-linked (GlcNAc...) asparagine glycan. An intramembrane region (helical; Pore-forming) is located at residues 130 to 141; that stretch reads FPSAFLFFIETE. An intramembrane region (pore-forming) is located at residues 142-148; it reads ATIGYGY. The Selectivity filter motif lies at 143-148; that stretch reads TIGYGY. Topologically, residues 149–157 are extracellular; sequence RYITDKCPE. A helical transmembrane segment spans residues 158–179; sequence GIILFLFQSILGSIVDAFLIGC. Residues 180–501 lie on the Cytoplasmic side of the membrane; it reads MFIKMSQPKK…LRKMNSDRFT (322 aa). The polyphosphoinositide (PIP2)-binding stretch occupies residues 182–209; the sequence is IKMSQPKKRAETLMFSEHAVISMRDGKL. Phosphoserine occurs at positions 385 and 424. The span at 456–467 shows a compositional bias: polar residues; it reads TKMLSDPMSQSV. Residues 456–501 are disordered; it reads TKMLSDPMSQSVADLPPKLQKMAGGPTRMEGNLPAKLRKMNSDRFT.

The protein belongs to the inward rectifier-type potassium channel (TC 1.A.2.1) family. KCNJ3 subfamily. Associates with KCNJ5/GIRK4 or KCNJ6/GIRK2 to form a G-protein activated heteromultimer pore-forming unit. The resulting inward current is much larger. Associates with KCNJ9/GIRK3 to form a G-protein activated heteromultimer pore-forming unit.

It localises to the membrane. The catalysed reaction is K(+)(in) = K(+)(out). With respect to regulation, heteromultimer composed of KCNJ3/GIRK1 and KCNJ5/GIRK4 is activated by phosphatidylinositol 4,5 biphosphate (PtdIns(4,5)P2). Its function is as follows. Inward rectifier potassium channels are characterized by a greater tendency to allow potassium to flow into the cell rather than out of it. Their voltage dependence is regulated by the concentration of extracellular potassium; as external potassium is raised, the voltage range of the channel opening shifts to more positive voltages. The inward rectification is mainly due to the blockage of outward current by internal magnesium. This potassium channel is controlled by G proteins. This receptor plays a crucial role in regulating the heartbeat. Forms a functional channel in association with KCNJ9/GIRK3. The polypeptide is G protein-activated inward rectifier potassium channel 1 (Kcnj3) (Rattus norvegicus (Rat)).